We begin with the raw amino-acid sequence, 495 residues long: Internal alternative NAD(P)H-ubiquinone oxidoreductase A1, mitochondrial (495 aa).

Residues 1-41 constitute a mitochondrion transit peptide; it reads MPWFKNLIKISKTITNQSSSYKSITPLASPLLAQFLQFTKQ. Residue 61–91 coordinates FAD; that stretch reads RIVVLGSGWAGCRLMKDIDTNIYDVVCVSPR. 228–264 is an NAD(+) binding site; the sequence is LHCVVVGGGPTGVEFSGELSDFILKDVHQRYAHVKDY. A Microbody targeting signal motif is present at residues 486–495; the sequence is LVFGRDISRI.

This sequence belongs to the NADH dehydrogenase family. The cofactor is FAD.

It is found in the mitochondrion inner membrane. The protein resides in the peroxisome. It catalyses the reaction a quinone + NADH + H(+) = a quinol + NAD(+). The enzyme catalyses a ubiquinone + NADH + H(+) = a ubiquinol + NAD(+). Functionally, alternative NADH-ubiquinone oxidoreductase which catalyzes the oxidation of mitochondrial NADH does not translocate protons across the inner mitochondrial membrane. The protein is Internal alternative NAD(P)H-ubiquinone oxidoreductase A1, mitochondrial (NDA1) of Solanum tuberosum (Potato).